We begin with the raw amino-acid sequence, 227 residues long: MGVSIRALHPWAVDAAEGRRLQQTLREQLCLKTPRGFRPRLVAGVDAGVVDGGRTIRAAVVVMSLPDLAVVTQSVARAPAIMPYVPGLLSFRELPGVVRALEQLDVTPELLLCDGQGIAHPRRLGIAAHLGLITDLPAIGVGKSRLVGTYREPRPEKGATSGLYDGHERIGTVLRSRDHVRPLYVSPGHRISHEDAVHWVLTCCTRYRLPEPQRAADRLASAKEAPA.

2 residues coordinate Mg(2+): aspartate 46 and aspartate 114.

This sequence belongs to the endonuclease V family. Requires Mg(2+) as cofactor.

It is found in the cytoplasm. It catalyses the reaction Endonucleolytic cleavage at apurinic or apyrimidinic sites to products with a 5'-phosphate.. Functionally, DNA repair enzyme involved in the repair of deaminated bases. Selectively cleaves double-stranded DNA at the second phosphodiester bond 3' to a deoxyinosine leaving behind the intact lesion on the nicked DNA. The chain is Endonuclease V from Alkalilimnicola ehrlichii (strain ATCC BAA-1101 / DSM 17681 / MLHE-1).